The sequence spans 126 residues: Aspartate 1-decarboxylase (126 aa).

The active-site Schiff-base intermediate with substrate; via pyruvic acid is S25. Position 25 is a pyruvic acid (Ser) (S25). Residue T57 participates in substrate binding. Catalysis depends on Y58, which acts as the Proton donor. 73–75 (GAA) provides a ligand contact to substrate.

It belongs to the PanD family. Heterooctamer of four alpha and four beta subunits. Pyruvate serves as cofactor. In terms of processing, is synthesized initially as an inactive proenzyme, which is activated by self-cleavage at a specific serine bond to produce a beta-subunit with a hydroxyl group at its C-terminus and an alpha-subunit with a pyruvoyl group at its N-terminus.

It is found in the cytoplasm. It catalyses the reaction L-aspartate + H(+) = beta-alanine + CO2. Its pathway is cofactor biosynthesis; (R)-pantothenate biosynthesis; beta-alanine from L-aspartate: step 1/1. Catalyzes the pyruvoyl-dependent decarboxylation of aspartate to produce beta-alanine. This chain is Aspartate 1-decarboxylase, found in Salmonella dublin (strain CT_02021853).